The chain runs to 137 residues: Small ribosomal subunit protein uS11 (137 aa).

A compositionally biased stretch (low complexity) spans 1–11; sequence MAKQAKAGAAR. Positions 1-32 are disordered; the sequence is MAKQAKAGAARRPQRGRRRERKNVPRGQAHVQ. The segment covering 12–21 has biased composition (basic residues); it reads RPQRGRRRER.

Belongs to the universal ribosomal protein uS11 family. As to quaternary structure, part of the 30S ribosomal subunit. Interacts with proteins S7 and S18. Binds to IF-3.

Its function is as follows. Located on the platform of the 30S subunit, it bridges several disparate RNA helices of the 16S rRNA. Forms part of the Shine-Dalgarno cleft in the 70S ribosome. The sequence is that of Small ribosomal subunit protein uS11 from Herpetosiphon aurantiacus (strain ATCC 23779 / DSM 785 / 114-95).